The following is a 371-amino-acid chain: Sporulation-specific protein 2 (371 aa).

It localises to the spore wall. In terms of biological role, essential for sporulation and seems to have a role at the time of, or after, initiation of nuclear division. Appears to have a role in outer spore wall formation. This Saccharomyces cerevisiae (strain ATCC 204508 / S288c) (Baker's yeast) protein is Sporulation-specific protein 2 (SSP2).